The primary structure comprises 677 residues: UvrABC system protein B (677 aa).

Residues 24–412 (EGVLEGVPAQ…EGIVVEQVIR (389 aa)) form the Helicase ATP-binding domain. 37–44 (GVTGSGKT) contributes to the ATP binding site. Residues 90–113 (YYDYYQPEAYLPSSDTYIEKDLAI) carry the Beta-hairpin motif. The Helicase C-terminal domain occupies 429–591 (QIDDLMEEIQ…ITPQQIKKAR (163 aa)). Residues 635-670 (EKSMERTRKLMQEAAKKLEFIEAAQYRDELLKMEDL) form the UVR domain.

The protein belongs to the UvrB family. In terms of assembly, forms a heterotetramer with UvrA during the search for lesions. Interacts with UvrC in an incision complex.

Its subcellular location is the cytoplasm. Functionally, the UvrABC repair system catalyzes the recognition and processing of DNA lesions. A damage recognition complex composed of 2 UvrA and 2 UvrB subunits scans DNA for abnormalities. Upon binding of the UvrA(2)B(2) complex to a putative damaged site, the DNA wraps around one UvrB monomer. DNA wrap is dependent on ATP binding by UvrB and probably causes local melting of the DNA helix, facilitating insertion of UvrB beta-hairpin between the DNA strands. Then UvrB probes one DNA strand for the presence of a lesion. If a lesion is found the UvrA subunits dissociate and the UvrB-DNA preincision complex is formed. This complex is subsequently bound by UvrC and the second UvrB is released. If no lesion is found, the DNA wraps around the other UvrB subunit that will check the other stand for damage. The sequence is that of UvrABC system protein B from Bacteroides fragilis (strain YCH46).